We begin with the raw amino-acid sequence, 400 residues long: 2-[(L-alanin-3-ylcarbamoyl)methyl]-2-hydroxybutanedioate decarboxylase (400 aa).

At K50 the chain carries N6-(pyridoxal phosphate)lysine. Pyridoxal 5'-phosphate is bound by residues G228 and 266 to 269 (ECGR). The Proton donor role is filled by C344. Pyridoxal 5'-phosphate is bound at residue Y373.

It belongs to the Orn/Lys/Arg decarboxylase class-II family. In terms of assembly, homodimer. The cofactor is pyridoxal 5'-phosphate.

The catalysed reaction is 2-[(L-alanin-3-ylcarbamoyl)methyl]-2-hydroxybutanedioate + H(+) = 2-[(2-aminoethylcarbamoyl)methyl]-2-hydroxybutanedioate + CO2. Its pathway is siderophore biosynthesis. Functionally, catalyzes the decarboxylation of citryl-L-2,3-diaminopropionic acid to citryl-diaminoethane, the second step in staphyloferrin B biosynthesis. This chain is 2-[(L-alanin-3-ylcarbamoyl)methyl]-2-hydroxybutanedioate decarboxylase, found in Staphylococcus aureus (strain NCTC 8325 / PS 47).